The chain runs to 499 residues: Glycerol kinase (499 aa).

T13 is a binding site for ADP. ATP-binding residues include T13, T14, and S15. T13 contacts sn-glycerol 3-phosphate. R17 is an ADP binding site. Residues R83, E84, Y135, and D244 each coordinate sn-glycerol 3-phosphate. Glycerol is bound by residues R83, E84, Y135, D244, and Q245. ADP contacts are provided by T266 and G309. Positions 266, 309, 313, and 410 each coordinate ATP. G410 and N414 together coordinate ADP.

Belongs to the FGGY kinase family. In terms of assembly, homotetramer and homodimer (in equilibrium).

The catalysed reaction is glycerol + ATP = sn-glycerol 3-phosphate + ADP + H(+). It participates in polyol metabolism; glycerol degradation via glycerol kinase pathway; sn-glycerol 3-phosphate from glycerol: step 1/1. With respect to regulation, activated by phosphorylation and inhibited by fructose 1,6-bisphosphate (FBP). Key enzyme in the regulation of glycerol uptake and metabolism. Catalyzes the phosphorylation of glycerol to yield sn-glycerol 3-phosphate. The sequence is that of Glycerol kinase from Brevibacillus brevis (strain 47 / JCM 6285 / NBRC 100599).